A 911-amino-acid chain; its full sequence is DNA replication licensing factor mcm4 (911 aa).

The interval 1 to 132 (MSSSQQSGRA…RPGVSTPSSL (132 aa)) is disordered. Phosphoserine is present on residues serine 37, serine 38, and serine 41. The segment covering 42–56 (TRLTTPRTTARTPLA) has biased composition (low complexity). Over residues 63–84 (ESSSPGPNIPQSSRSHLLSQRN) the composition is skewed to polar residues. A Phosphoserine modification is found at serine 92. The MCM domain maps to 493–702 (IYDILSRSLA…LDRKLANHIV (210 aa)). 545 to 552 (GDPSTSKS) lines the ATP pocket. An Arginine finger motif is present at residues 677–680 (SRFD).

This sequence belongs to the MCM family. As to quaternary structure, component of the mcm2-7 complex. The complex forms a toroidal hexameric ring with the proposed subunit order mcm2-mcm6-mcm4-mcm7-mcm3-mcm5. The heterodimers of mcm4/mcm6 and mcm3/mcm5 interact with mcm2 and mcm7.

The protein resides in the nucleus. It catalyses the reaction ATP + H2O = ADP + phosphate + H(+). Its function is as follows. Acts as a component of the mcm2-7 complex (mcm complex) which is the putative replicative helicase essential for 'once per cell cycle' DNA replication initiation and elongation in eukaryotic cells. The active ATPase sites in the mcm2-7 ring are formed through the interaction surfaces of two neighboring subunits such that a critical structure of a conserved arginine finger motif is provided in trans relative to the ATP-binding site of the Walker A box of the adjacent subunit. The six ATPase active sites, however, are likely to contribute differentially to the complex helicase activity. Required for S phase execution. The sequence is that of DNA replication licensing factor mcm4 (mcm4) from Schizosaccharomyces pombe (strain 972 / ATCC 24843) (Fission yeast).